Consider the following 300-residue polypeptide: tRNA uridine(34) hydroxylase (300 aa).

One can recognise a Rhodanese domain in the interval Ala-128–Ser-222. Cys-182 serves as the catalytic Cysteine persulfide intermediate.

This sequence belongs to the TrhO family.

It carries out the reaction uridine(34) in tRNA + AH2 + O2 = 5-hydroxyuridine(34) in tRNA + A + H2O. Functionally, catalyzes oxygen-dependent 5-hydroxyuridine (ho5U) modification at position 34 in tRNAs. The sequence is that of tRNA uridine(34) hydroxylase from Deinococcus radiodurans (strain ATCC 13939 / DSM 20539 / JCM 16871 / CCUG 27074 / LMG 4051 / NBRC 15346 / NCIMB 9279 / VKM B-1422 / R1).